A 449-amino-acid polypeptide reads, in one-letter code: Ribosomal protein uS12 methylthiotransferase RimO (449 aa).

The MTTase N-terminal domain maps to 7 to 123; that stretch reads QKVSMVSLGC…VAEILAEHHA (117 aa). Residues C16, C52, C86, C161, C165, and C168 each coordinate [4Fe-4S] cluster. The Radical SAM core domain occupies 147-377; that stretch reads SSPGWYAYLK…MKTQARVSFR (231 aa). A TRAM domain is found at 380–448; sequence RAMVGQTEQV…DYDLVAEMIE (69 aa).

This sequence belongs to the methylthiotransferase family. RimO subfamily. [4Fe-4S] cluster serves as cofactor.

It is found in the cytoplasm. The catalysed reaction is L-aspartate(89)-[ribosomal protein uS12]-hydrogen + (sulfur carrier)-SH + AH2 + 2 S-adenosyl-L-methionine = 3-methylsulfanyl-L-aspartate(89)-[ribosomal protein uS12]-hydrogen + (sulfur carrier)-H + 5'-deoxyadenosine + L-methionine + A + S-adenosyl-L-homocysteine + 2 H(+). Functionally, catalyzes the methylthiolation of an aspartic acid residue of ribosomal protein uS12. The protein is Ribosomal protein uS12 methylthiotransferase RimO of Trichlorobacter lovleyi (strain ATCC BAA-1151 / DSM 17278 / SZ) (Geobacter lovleyi).